The chain runs to 673 residues: UvrABC system protein B (673 aa).

The Helicase ATP-binding domain occupies E26–R183. G39–T46 provides a ligand contact to ATP. The Beta-hairpin motif lies at Y92 to V115. One can recognise a Helicase C-terminal domain in the interval Q431–L597. The region spanning Q633–L668 is the UVR domain.

Belongs to the UvrB family. In terms of assembly, forms a heterotetramer with UvrA during the search for lesions. Interacts with UvrC in an incision complex.

The protein localises to the cytoplasm. In terms of biological role, the UvrABC repair system catalyzes the recognition and processing of DNA lesions. A damage recognition complex composed of 2 UvrA and 2 UvrB subunits scans DNA for abnormalities. Upon binding of the UvrA(2)B(2) complex to a putative damaged site, the DNA wraps around one UvrB monomer. DNA wrap is dependent on ATP binding by UvrB and probably causes local melting of the DNA helix, facilitating insertion of UvrB beta-hairpin between the DNA strands. Then UvrB probes one DNA strand for the presence of a lesion. If a lesion is found the UvrA subunits dissociate and the UvrB-DNA preincision complex is formed. This complex is subsequently bound by UvrC and the second UvrB is released. If no lesion is found, the DNA wraps around the other UvrB subunit that will check the other stand for damage. The polypeptide is UvrABC system protein B (Klebsiella pneumoniae subsp. pneumoniae (strain ATCC 700721 / MGH 78578)).